Reading from the N-terminus, the 1260-residue chain is Ankyrin repeat and sterile alpha motif domain-containing protein 1B (1260 aa).

ANK repeat units follow at residues 2–31 (GKDQ…GGIL), 58–87 (SGYT…STNV), 91–120 (KGYF…SHSR), 127–156 (ENET…DPTI), 160–189 (KLET…NLMS), 193–222 (RKHT…DVSC), and 225–254 (EKGS…DANI). A disordered region spans residues 298-326 (HAQEDTAQETRLSSPAQSPSQKTKSETVT). Residues 306 to 326 (ETRLSSPAQSPSQKTKSETVT) are compositionally biased toward polar residues. Residues S310, S311, S315, S354, and S365 each carry the phosphoserine modification. Disordered stretches follow at residues 368–402 (ELGK…SCGP), 491–513 (PGTG…PSPD), and 556–642 (GCTS…EASL). A compositionally biased stretch (polar residues) spans 372-385 (NGSQSVRTSSTINL). A Phosphothreonine modification is found at T504. Phosphoserine is present on residues S508 and S511. Residues 556 to 575 (GCTSFTSSPPVSPPTSSVET) show a composition bias toward low complexity. The span at 576–588 (TEIKNEGAEHTDD) shows a compositional bias: basic and acidic residues. S739 bears the Phosphoserine mark. Residues 754 to 778 (VNWSKSSTAERSSKDNSERTPSFTS) are disordered. Phosphothreonine is present on T773. A Phosphoserine modification is found at S775. SAM domains are found at residues 810–876 (CPVQ…LPKM) and 884–949 (YHPT…RLHE). The residue at position 901 (Y901) is a Phosphotyrosine. A Nuclear localization signal motif is present at residues 935–938 (HRKR). A disordered region spans residues 946 to 989 (RLHEDPPQKPPRSITLREPSGNHTPPQLSPSLSQSTYTTGGSLD). Residues 969 to 984 (TPPQLSPSLSQSTYTT) are compositionally biased toward low complexity. Residue S974 is modified to Phosphoserine. Phosphotyrosine is present on Y1007. The PID domain occupies 1056 to 1213 (IFQSCDYKAF…SFENKPSKPI (158 aa)). The interval 1197–1217 (HSSTLPESFENKPSKPIPKPR) is disordered.

In terms of assembly, interacts with EPHA8. Isoform 2 interacts with COIL. Isoform 3 interacts with DLG4. Nuclear translocation of isoform 3 requires an NMDAR-dependent proteolytic cleavage. A 35 kDa N-terminal form shuttles to the nucleus. As to expression, isoform 3 is brain specific and highly enriched in the postsynaptic densities (PSDs), especially in cortical, striatal and hippocampal PSDs.

The protein localises to the cytoplasm. Its subcellular location is the nucleus. It localises to the postsynaptic density. The protein resides in the cell projection. It is found in the dendritic spine. The protein localises to the cajal body. Functionally, isoform 2 may participate in the regulation of nucleoplasmic coilin protein interactions in neuronal and transformed cells. Its function is as follows. Isoform 3 can regulate global protein synthesis by altering nucleolar numbers. The chain is Ankyrin repeat and sterile alpha motif domain-containing protein 1B (Anks1b) from Rattus norvegicus (Rat).